The following is a 164-amino-acid chain: MSARPEGSPPEVTLETSMGPFTVEMYYKHSPRTCRNFLELSRRGYYDNVLFHRIVKDFIVQGGDPTGTGRGGESIYGSKFEDEINKELKHTGAGILSMANAGPNTNGSQFFITLAPQPSLDGKHTIFGRVCRGMEVIKRLGSVQTDNTDRPIHEVKILRTKVID.

The PPIase cyclophilin-type domain maps to 12–162; it reads VTLETSMGPF…HEVKILRTKV (151 aa).

The protein belongs to the cyclophilin-type PPIase family. Ubiquitous.

It localises to the cytoplasm. It carries out the reaction [protein]-peptidylproline (omega=180) = [protein]-peptidylproline (omega=0). PPIases accelerate the folding of proteins. It catalyzes the cis-trans isomerization of proline imidic peptide bonds in oligopeptides. In Arabidopsis thaliana (Mouse-ear cress), this protein is Peptidyl-prolyl cis-trans isomerase CYP18-2 (CYP18-2).